The following is a 643-amino-acid chain: Macrolide export ATP-binding/permease protein MacB (643 aa).

An ABC transporter domain is found at 6 to 244 (IELKGVSRVF…QVRSPFGVRH (239 aa)). 42-49 (GASGSGKS) provides a ligand contact to ATP. 4 consecutive transmembrane segments (helical) span residues 270 to 290 (VLTLLGIVIGVASVIVMLAIG), 518 to 538 (LTILLGSIAAISLLVGGIGVM), 569 to 589 (FLIEAVVVSALGGLIGVVIGL), and 606 to 626 (LMPIVWAFGCAFVTGLLFGYL).

The protein belongs to the ABC transporter superfamily. Macrolide exporter (TC 3.A.1.122) family. As to quaternary structure, homodimer.

The protein resides in the cell inner membrane. Its function is as follows. Non-canonical ABC transporter that contains transmembrane domains (TMD), which form a pore in the inner membrane, and an ATP-binding domain (NBD), which is responsible for energy generation. Confers resistance against macrolides. The sequence is that of Macrolide export ATP-binding/permease protein MacB from Wolinella succinogenes (strain ATCC 29543 / DSM 1740 / CCUG 13145 / JCM 31913 / LMG 7466 / NCTC 11488 / FDC 602W) (Vibrio succinogenes).